The following is a 466-amino-acid chain: MSTGKVVQVIGPVVDIAFEAGQQVPDINNALVIDKGNGQSLTVEVSLALGDGVVRTIAMDSTDGLQRGMGVVDTGNPIEVPVGEATLGRVFNVLGEPVDNNGAIASDVRRSSIHRDAPKYDELTSSTEILETGIKVIDLLAPYVRGGKIGLFGGAGVGKTVLIQELIHNIAQGHNGISVFTGVGERTREGNDMYHEMEESGVLKQTAMVYGQMNEPPGARMRVALTGLTMAENFRDNEGKDVLLFIDNIFRFTQAGSEVSALLGRIPSAVGYQPTLATEMGQLQERITSTKKGSVTSIQAVYVPADDYTDPAPATTFAHLDATTNLERALTQQGIYPAVDPLASTSSALDPQIVGQEHYEVATEVQRTLQRYRELQDIISILGMDELSDEEKTTVNRARRIQFFLSQPFSVAETFTGINGEYVPVAETVRSFKEILDGKYDDLPEDAFRNVGAIEQVVEKAKTMAQ.

ATP is bound at residue 153–160 (GGAGVGKT).

The protein belongs to the ATPase alpha/beta chains family. As to quaternary structure, F-type ATPases have 2 components, CF(1) - the catalytic core - and CF(0) - the membrane proton channel. CF(1) has five subunits: alpha(3), beta(3), gamma(1), delta(1), epsilon(1). CF(0) has three main subunits: a(1), b(2) and c(9-12). The alpha and beta chains form an alternating ring which encloses part of the gamma chain. CF(1) is attached to CF(0) by a central stalk formed by the gamma and epsilon chains, while a peripheral stalk is formed by the delta and b chains.

The protein resides in the cell membrane. The catalysed reaction is ATP + H2O + 4 H(+)(in) = ADP + phosphate + 5 H(+)(out). Its function is as follows. Produces ATP from ADP in the presence of a proton gradient across the membrane. The catalytic sites are hosted primarily by the beta subunits. This chain is ATP synthase subunit beta, found in Leuconostoc mesenteroides subsp. mesenteroides (strain ATCC 8293 / DSM 20343 / BCRC 11652 / CCM 1803 / JCM 6124 / NCDO 523 / NBRC 100496 / NCIMB 8023 / NCTC 12954 / NRRL B-1118 / 37Y).